The sequence spans 297 residues: Probable tyrosine phosphatase protein J2 (297 aa).

The 266-residue stretch at 21 to 286 (DSLSCIIQEY…VFCYHLIHAY (266 aa)) folds into the Tyrosine-protein phosphatase domain. C227 serves as the catalytic Phosphocysteine intermediate.

The protein belongs to the protein-tyrosine phosphatase family.

The enzyme catalyses O-phospho-L-tyrosyl-[protein] + H2O = L-tyrosyl-[protein] + phosphate. The sequence is that of Probable tyrosine phosphatase protein J2 (J3) from Microplitis demolitor (Parasitoid wasp).